A 322-amino-acid chain; its full sequence is Coelomocyte uptake defective protein 15 (322 aa).

The first 20 residues, 1–20, serve as a signal peptide directing secretion; it reads MVNSLSRILFCSLLIFSVIS. Asn62, Asn98, Asn144, Asn170, Asn180, Asn183, and Asn222 each carry an N-linked (GlcNAc...) asparagine glycan. A helical membrane pass occupies residues 244-264; sequence LFGIMITFGTLLLLTALFYAA.

The protein belongs to the OSTM1 family.

It localises to the membrane. In terms of biological role, modulates the transport of substances from the endosomal to lysosomal compartments. Plays a role in lysosome formation and function in coelomocytes. The protein is Coelomocyte uptake defective protein 15 of Caenorhabditis elegans.